Here is a 509-residue protein sequence, read N- to C-terminus: Phosphoenolpyruvate carboxylase (509 aa).

The protein belongs to the PEPCase type 2 family. As to quaternary structure, homotetramer. The cofactor is Mg(2+).

It carries out the reaction oxaloacetate + phosphate = phosphoenolpyruvate + hydrogencarbonate. Catalyzes the irreversible beta-carboxylation of phosphoenolpyruvate (PEP) to form oxaloacetate (OAA), a four-carbon dicarboxylic acid source for the tricarboxylic acid cycle. This Metallosphaera sedula (strain ATCC 51363 / DSM 5348 / JCM 9185 / NBRC 15509 / TH2) protein is Phosphoenolpyruvate carboxylase.